The chain runs to 98 residues: MPRIVNPLDEMLFKEVLKEQQRIRVYVERARYGKLKTIIEGIDEKEFDLEDIAKKLKAKLACGGTAKNGRIELQGDHRDRVKKLLAELGFSEELIEVE.

The protein belongs to the SUI1 family.

This Thermococcus kodakarensis (strain ATCC BAA-918 / JCM 12380 / KOD1) (Pyrococcus kodakaraensis (strain KOD1)) protein is Protein translation factor SUI1 homolog.